A 357-amino-acid chain; its full sequence is CD4+ T-cell-stimulating antigen (357 aa).

Residues 1–22 (MKKRTFALALSMIIASGVILGA) form the signal peptide. Cysteine 23 carries the N-palmitoyl cysteine lipid modification. The S-diacylglycerol cysteine moiety is linked to residue cysteine 23.

It belongs to the BMP lipoprotein family.

It localises to the cell membrane. This is CD4+ T-cell-stimulating antigen (tcsA) from Listeria monocytogenes serovar 1/2a (strain ATCC BAA-679 / EGD-e).